A 545-amino-acid chain; its full sequence is T-complex protein 1 subunit gamma (545 aa).

An N-acetylmethionine modification is found at M1. The disordered stretch occupies residues M1–S24. A Phosphoserine modification is found at S11. A Glycyl lysine isopeptide (Lys-Gly) (interchain with G-Cter in SUMO2) cross-link involves residue K15. G42 contacts ADP. G42 serves as a coordination point for ATP. D93 lines the Mg(2+) pocket. ADP-binding residues include G94, T95, T96, S97, T162, and K163. ATP contacts are provided by G94, T95, and T96. S170 carries the post-translational modification Phosphoserine. Residue K222 is modified to N6-acetyllysine. 2 positions are modified to phosphoserine: S243 and S244. Y247 is modified (phosphotyrosine). Residues K248 and K249 each participate in a glycyl lysine isopeptide (Lys-Gly) (interchain with G-Cter in SUMO2) cross-link. Phosphoserine is present on S252. Residues C366 and C372 are joined by a disulfide bond. A Glycyl lysine isopeptide (Lys-Gly) (interchain with G-Cter in SUMO2) cross-link involves residue K381. G411 contacts ADP. Position 411 (G411) interacts with ATP. 2 positions are modified to phosphothreonine: T430 and T459. 4 residues coordinate ADP: G482, E483, E497, and K502. Residue G482 coordinates ATP. Residue E497 coordinates ATP. Positions H526 to E545 are disordered.

This sequence belongs to the TCP-1 chaperonin family. As to quaternary structure, component of the chaperonin-containing T-complex (TRiC), a hexadecamer composed of two identical back-to-back stacked rings enclosing a protein folding chamber. Each ring is made up of eight different subunits: TCP1/CCT1, CCT2, CCT3, CCT4, CCT5, CCT6A/CCT6, CCT7, CCT8. Interacts with PACRG. Interacts with DNAAF4. Interacts with DLEC1.

It localises to the cytoplasm. The catalysed reaction is ATP + H2O = ADP + phosphate + H(+). Its function is as follows. Component of the chaperonin-containing T-complex (TRiC), a molecular chaperone complex that assists the folding of actin, tubulin and other proteins upon ATP hydrolysis. The TRiC complex mediates the folding of WRAP53/TCAB1, thereby regulating telomere maintenance. As part of the TRiC complex may play a role in the assembly of BBSome, a complex involved in ciliogenesis regulating transports vesicles to the cilia. This is T-complex protein 1 subunit gamma (Cct3) from Rattus norvegicus (Rat).